A 293-amino-acid polypeptide reads, in one-letter code: 33 kDa chaperonin (293 aa).

Cystine bridges form between Cys-239/Cys-241 and Cys-272/Cys-275.

The protein belongs to the HSP33 family. In terms of processing, under oxidizing conditions two disulfide bonds are formed involving the reactive cysteines. Under reducing conditions zinc is bound to the reactive cysteines and the protein is inactive.

The protein localises to the cytoplasm. Redox regulated molecular chaperone. Protects both thermally unfolding and oxidatively damaged proteins from irreversible aggregation. Plays an important role in the bacterial defense system toward oxidative stress. The polypeptide is 33 kDa chaperonin (Limosilactobacillus fermentum (strain NBRC 3956 / LMG 18251) (Lactobacillus fermentum)).